Reading from the N-terminus, the 415-residue chain is Glutamyl-tRNA reductase (415 aa).

Substrate-binding positions include 49–52 (TCNR), Ser106, 111–113 (EPQ), and Gln117. Residue Cys50 is the Nucleophile of the active site. Residue 186–191 (GAGETI) participates in NADP(+) binding.

Belongs to the glutamyl-tRNA reductase family. Homodimer.

It carries out the reaction (S)-4-amino-5-oxopentanoate + tRNA(Glu) + NADP(+) = L-glutamyl-tRNA(Glu) + NADPH + H(+). The protein operates within porphyrin-containing compound metabolism; protoporphyrin-IX biosynthesis; 5-aminolevulinate from L-glutamyl-tRNA(Glu): step 1/2. Its function is as follows. Catalyzes the NADPH-dependent reduction of glutamyl-tRNA(Glu) to glutamate 1-semialdehyde (GSA). The polypeptide is Glutamyl-tRNA reductase (Teredinibacter turnerae (strain ATCC 39867 / T7901)).